The following is a 232-amino-acid chain: Large ribosomal subunit protein uL1 (232 aa).

This sequence belongs to the universal ribosomal protein uL1 family. Part of the 50S ribosomal subunit.

Functionally, binds directly to 23S rRNA. The L1 stalk is quite mobile in the ribosome, and is involved in E site tRNA release. Protein L1 is also a translational repressor protein, it controls the translation of the L11 operon by binding to its mRNA. In Parabacteroides distasonis (strain ATCC 8503 / DSM 20701 / CIP 104284 / JCM 5825 / NCTC 11152), this protein is Large ribosomal subunit protein uL1.